A 366-amino-acid polypeptide reads, in one-letter code: GDSL esterase/lipase At1g74460 (366 aa).

Residues M1–C20 form the signal peptide. S30 (nucleophile) is an active-site residue. N113 and N260 each carry an N-linked (GlcNAc...) asparagine glycan. Active-site residues include D320 and H323.

The protein belongs to the 'GDSL' lipolytic enzyme family.

It is found in the secreted. The polypeptide is GDSL esterase/lipase At1g74460 (Arabidopsis thaliana (Mouse-ear cress)).